Reading from the N-terminus, the 237-residue chain is Purine nucleoside phosphorylase DeoD-type (237 aa).

H4 provides a ligand contact to a purine D-ribonucleoside. Phosphate is bound by residues G20, R24, R43, and 87–90; that span reads RVGT. A purine D-ribonucleoside contacts are provided by residues 179-181 and 203-204; these read EME and SD. D204 acts as the Proton donor in catalysis.

It belongs to the PNP/UDP phosphorylase family. In terms of assembly, homohexamer; trimer of homodimers.

The catalysed reaction is a purine D-ribonucleoside + phosphate = a purine nucleobase + alpha-D-ribose 1-phosphate. The enzyme catalyses a purine 2'-deoxy-D-ribonucleoside + phosphate = a purine nucleobase + 2-deoxy-alpha-D-ribose 1-phosphate. Functionally, catalyzes the reversible phosphorolytic breakdown of the N-glycosidic bond in the beta-(deoxy)ribonucleoside molecules, with the formation of the corresponding free purine bases and pentose-1-phosphate. The polypeptide is Purine nucleoside phosphorylase DeoD-type (Exiguobacterium sp. (strain ATCC BAA-1283 / AT1b)).